A 228-amino-acid polypeptide reads, in one-letter code: Growth arrest-specific protein 1 homolog (228 aa).

Positions 1–17 are cleaved as a signal peptide; that stretch reads MRRVILPLVMTVTLCLA. N-linked (GlcNAc...) asparagine glycosylation is found at Asn-143 and Asn-156. Asp-205 carries the GPI-anchor amidated aspartate lipid modification. The propeptide at 206-228 is removed in mature form; the sequence is SSVGHGFNILSAISVYLLTVLVF.

In terms of tissue distribution, pharynx muscle cells from its early formation, in the two-fold embryo, until the adult stage.

The protein resides in the cell membrane. In terms of biological role, role in pharynx function or development. The sequence is that of Growth arrest-specific protein 1 homolog (phg-1) from Caenorhabditis elegans.